The sequence spans 508 residues: UDP-N-acetylmuramoyl-L-alanyl-D-glutamate--L-lysine ligase (508 aa).

Position 47 (Ser-47) interacts with UDP-N-acetyl-alpha-D-muramoyl-L-alanyl-D-glutamate. 124–130 (GTKGKTT) is a binding site for ATP. UDP-N-acetyl-alpha-D-muramoyl-L-alanyl-D-glutamate is bound by residues 168-169 (TT), Ser-195, and Arg-203. Lys-237 bears the N6-carboxylysine mark. The short motif at 425 to 428 (DDPA) is the L-lysine recognition motif element.

The protein belongs to the MurCDEF family. MurE subfamily. Post-translationally, carboxylation is probably crucial for Mg(2+) binding and, consequently, for the gamma-phosphate positioning of ATP.

It localises to the cytoplasm. It carries out the reaction UDP-N-acetyl-alpha-D-muramoyl-L-alanyl-D-glutamate + L-lysine + ATP = UDP-N-acetyl-alpha-D-muramoyl-L-alanyl-gamma-D-glutamyl-L-lysine + ADP + phosphate + H(+). It participates in cell wall biogenesis; peptidoglycan biosynthesis. In terms of biological role, catalyzes the addition of L-lysine to the nucleotide precursor UDP-N-acetylmuramoyl-L-alanyl-D-glutamate (UMAG) in the biosynthesis of bacterial cell-wall peptidoglycan. This is UDP-N-acetylmuramoyl-L-alanyl-D-glutamate--L-lysine ligase from Enterococcus faecalis (strain ATCC 700802 / V583).